The chain runs to 383 residues: Probable sphingolipid long chain base-responsive protein pil2 (383 aa).

Ser162 carries the post-translational modification Phosphoserine. 2 disordered regions span residues 292–336 (PRTD…EDYQ) and 356–383 (GEEDDEEVGSQGVAETSMPSTSAQPIAA). Over residues 311-324 (TTSGTTHSYTSTGS) the composition is skewed to low complexity. 2 stretches are compositionally biased toward polar residues: residues 325–336 (KRYSQMGTEDYQ) and 368–383 (VAETSMPSTSAQPIAA).

Phosphorylated by ksg1 and ppk21. Phosphorylation is regulated by sphingolipid long chain bases (LCBs).

Its function is as follows. Negative regulator of cell wall integrity (CWI) in unstressed cells, probably by inhibiting protein kinase ksg1/ppk21 activity and regulating their downstream CWI pathways pck2-MAP kinase pathway and protein kinase gad8 pathway. Activity may be regulated by the transient increase of sphingolipid long chain bases (LCBs) during heat stress. This is Probable sphingolipid long chain base-responsive protein pil2 (pil2) from Schizosaccharomyces pombe (strain 972 / ATCC 24843) (Fission yeast).